Reading from the N-terminus, the 113-residue chain is uncharacterized protein (113 aa).

Residues 4 to 26 (VLFKIAVALLYLLSFFLHRLHLR) traverse the membrane as a helical segment. A disordered region spans residues 32–74 (RRRRRRHHRRHHRRHHHHRRRRRRRRRRRRRHHRHHHHRHRRR).

It localises to the membrane. This is an uncharacterized protein from Saccharomyces cerevisiae (strain ATCC 204508 / S288c) (Baker's yeast).